Reading from the N-terminus, the 615-residue chain is 1-deoxy-D-xylulose-5-phosphate synthase (615 aa).

Residues His72 and 113-115 (GHA) contribute to the thiamine diphosphate site. Asp144 is a binding site for Mg(2+). Thiamine diphosphate contacts are provided by residues 145 to 146 (GA), Asn173, Tyr281, and Glu360. Residue Asn173 participates in Mg(2+) binding.

Belongs to the transketolase family. DXPS subfamily. In terms of assembly, homodimer. It depends on Mg(2+) as a cofactor. The cofactor is thiamine diphosphate.

It carries out the reaction D-glyceraldehyde 3-phosphate + pyruvate + H(+) = 1-deoxy-D-xylulose 5-phosphate + CO2. The protein operates within metabolic intermediate biosynthesis; 1-deoxy-D-xylulose 5-phosphate biosynthesis; 1-deoxy-D-xylulose 5-phosphate from D-glyceraldehyde 3-phosphate and pyruvate: step 1/1. Functionally, catalyzes the acyloin condensation reaction between C atoms 2 and 3 of pyruvate and glyceraldehyde 3-phosphate to yield 1-deoxy-D-xylulose-5-phosphate (DXP). The sequence is that of 1-deoxy-D-xylulose-5-phosphate synthase from Thermus thermophilus (strain ATCC BAA-163 / DSM 7039 / HB27).